Here is a 417-residue protein sequence, read N- to C-terminus: UDP-N-acetylglucosamine 1-carboxyvinyltransferase 3 (417 aa).

22-23 (KN) provides a ligand contact to phosphoenolpyruvate. Arg92 is a binding site for UDP-N-acetyl-alpha-D-glucosamine. Cys116 (proton donor) is an active-site residue. Cys116 is modified (2-(S-cysteinyl)pyruvic acid O-phosphothioketal). UDP-N-acetyl-alpha-D-glucosamine is bound by residues 121 to 125 (RPIDQ), Asp304, and Ile326.

It belongs to the EPSP synthase family. MurA subfamily.

Its subcellular location is the cytoplasm. It catalyses the reaction phosphoenolpyruvate + UDP-N-acetyl-alpha-D-glucosamine = UDP-N-acetyl-3-O-(1-carboxyvinyl)-alpha-D-glucosamine + phosphate. The protein operates within cell wall biogenesis; peptidoglycan biosynthesis. Cell wall formation. Adds enolpyruvyl to UDP-N-acetylglucosamine. This Caldanaerobacter subterraneus subsp. tengcongensis (strain DSM 15242 / JCM 11007 / NBRC 100824 / MB4) (Thermoanaerobacter tengcongensis) protein is UDP-N-acetylglucosamine 1-carboxyvinyltransferase 3.